The chain runs to 574 residues: Proline--tRNA ligase (574 aa).

It belongs to the class-II aminoacyl-tRNA synthetase family. ProS type 1 subfamily. Homodimer.

The protein resides in the cytoplasm. It carries out the reaction tRNA(Pro) + L-proline + ATP = L-prolyl-tRNA(Pro) + AMP + diphosphate. Its function is as follows. Catalyzes the attachment of proline to tRNA(Pro) in a two-step reaction: proline is first activated by ATP to form Pro-AMP and then transferred to the acceptor end of tRNA(Pro). As ProRS can inadvertently accommodate and process non-cognate amino acids such as alanine and cysteine, to avoid such errors it has two additional distinct editing activities against alanine. One activity is designated as 'pretransfer' editing and involves the tRNA(Pro)-independent hydrolysis of activated Ala-AMP. The other activity is designated 'posttransfer' editing and involves deacylation of mischarged Ala-tRNA(Pro). The misacylated Cys-tRNA(Pro) is not edited by ProRS. The polypeptide is Proline--tRNA ligase (Thioalkalivibrio sulfidiphilus (strain HL-EbGR7)).